The sequence spans 73 residues: Pollen allergen Amb t 5 (73 aa).

The first 20 residues, 1–20, serve as a signal peptide directing secretion; the sequence is MKNIFMLTLFILIITSTIKA. A propeptide spanning residues 21–33 is cleaved from the precursor; sequence IGSTNEVDEIKQE. 4 disulfides stabilise this stretch: C38–C68, C44–C59, C51–C61, and C52–C72.

Monomer.

This is Pollen allergen Amb t 5 from Ambrosia trifida (Giant ragweed).